A 211-amino-acid polypeptide reads, in one-letter code: Protein-L-isoaspartate O-methyltransferase (211 aa).

Serine 60 is an active-site residue.

Belongs to the methyltransferase superfamily. L-isoaspartyl/D-aspartyl protein methyltransferase family.

It is found in the cytoplasm. It carries out the reaction [protein]-L-isoaspartate + S-adenosyl-L-methionine = [protein]-L-isoaspartate alpha-methyl ester + S-adenosyl-L-homocysteine. Its function is as follows. Catalyzes the methyl esterification of L-isoaspartyl residues in peptides and proteins that result from spontaneous decomposition of normal L-aspartyl and L-asparaginyl residues. It plays a role in the repair and/or degradation of damaged proteins. This is Protein-L-isoaspartate O-methyltransferase from Pseudomonas fluorescens (strain Pf0-1).